A 366-amino-acid chain; its full sequence is Inhibin alpha chain (366 aa).

Positions 1-20 (MVIQPSLLLLLLLTLQDVDS) are cleaved as a signal peptide. Positions 21-63 (CQGPELVRELVLAKVKALFLDALGPPAMDGEGGGPGIRRLPRR) are excised as a propeptide. Positions 64–233 (HALGGFMHRT…APSAGERARR (170 aa)) are cleaved as a propeptide — inhibin alpha N-terminal region. Asn-147 and Asn-269 each carry an N-linked (GlcNAc...) asparagine glycan. Disulfide bonds link Cys-263–Cys-328, Cys-292–Cys-363, and Cys-296–Cys-365.

Belongs to the TGF-beta family. In terms of assembly, dimeric, linked by one or more disulfide bonds. Activin B is a dimer of alpha and beta-B. Inhibin A is a dimer of alpha and beta-A. Inhibin B is a dimer of alpha and beta-B. Interacts with TGFBR3L; this interaction regulates female fertility. In terms of processing, proteolytic processing yields a number of bioactive forms, consisting either solely of the mature alpha chain, of the most N-terminal propeptide linked through a disulfide bond to the mature alpha chain, or of the entire proprotein. Mainly expressed in ovary and testis. Alpha- and beta-B-subunits are the predominant forms found in testis. Also found in placenta, pituitary, adrenal gland, bone marrow, kidney, spinal cord and brain.

The protein localises to the secreted. Its function is as follows. Inhibins and activins inhibit and activate, respectively, the secretion of follitropin by the pituitary gland. Inhibins/activins are involved in regulating a number of diverse functions such as hypothalamic and pituitary hormone secretion, gonadal hormone secretion, germ cell development and maturation, erythroid differentiation, insulin secretion, nerve cell survival, embryonic axial development or bone growth, depending on their subunit composition. Inhibins appear to oppose the functions of activins. In terms of biological role, inhibin A is a dimer of alpha/INHA and beta-A/INHBA that functions as a feedback regulator in the hypothalamic-pituitary-gonadal (HPG) axis. Inhibits the secretion of FSH from the anterior pituitary gland by acting on pituitary gonadotrope cells. Antagonizes activin A by binding to the proteoglycan, betaglycan, and forming a stable complex with and, thereby, sequestering type II activin receptors while excluding type I receptor. Functionally, inhibin B is a dimer of alpha and beta-B that plays a crucial role in the regulation of the reproductive system by inhibiting the secretion of follicle-stimulating hormone (FSH) from the anterior pituitary gland. Thereby, maintains reproductive homeostasis in both males and females. Acts as a more potent suppressor of FSH release than inhibin A. Functions as competitive receptor antagonist binding activin type II receptors with high affinity in the presence of the TGF-beta type III coreceptor/TGFBR3L. The chain is Inhibin alpha chain (Inha) from Rattus norvegicus (Rat).